The following is a 454-amino-acid chain: MEIDTDYLGSILMDIEDRVEYADIRAGTSRTSSILMKDGKLQEVKSGRASGFRIRVLRNGSWGFAFTDEPSRLGEMALKAIKMTGSLRGDVQVGSGAPSVDKTMVRSSRPPSDVPAAEKRELVSDAHHAASVDGVVSTTVSYVDMESSSAFLNSEGSLIEMAETRVALFLNAVASDGSGIQFGHKSCGGTGGFEILEREDIEELGRRTGEKAVRLLKASPPPSGRFDIVTDPELTGVFIHEALGHAAEADLILQGDSILEGKLGEKIASEGVTIIDDPTIDGFGSYSYDAEGVRAAETVLVENGVLTSLLNSRETAFKLGLEPSGNARSAIGDQPIVRMSNTYLKPGDLSFDELIEDIRNGVYLRGSRGGQVDTGKGIFQFNAAESFRIQDGEIAEPVKDVSLSGNVLETLKNVDGVGSDFRLGIGFCGKSGQSVPVGDGGPHVRIRNAMVGGT.

Residues 92 to 115 (QVGSGAPSVDKTMVRSSRPPSDVP) form a disordered region.

This sequence belongs to the peptidase U62 family.

Probable metalloprotease. In Methanothermobacter thermautotrophicus (strain ATCC 29096 / DSM 1053 / JCM 10044 / NBRC 100330 / Delta H) (Methanobacterium thermoautotrophicum), this protein is Metalloprotease MTH_856.